A 202-amino-acid polypeptide reads, in one-letter code: Urease accessory protein UreE (202 aa).

Positions 171–188 are enriched in basic and acidic residues; the sequence is HHGHSHSHDHDHDHDHQH. The tract at residues 171–202 is disordered; sequence HHGHSHSHDHDHDHDHQHGPGCTHGHRGHDHH.

It belongs to the UreE family.

Its subcellular location is the cytoplasm. In terms of biological role, involved in urease metallocenter assembly. Binds nickel. Probably functions as a nickel donor during metallocenter assembly. The chain is Urease accessory protein UreE from Burkholderia ambifaria (strain ATCC BAA-244 / DSM 16087 / CCUG 44356 / LMG 19182 / AMMD) (Burkholderia cepacia (strain AMMD)).